A 730-amino-acid polypeptide reads, in one-letter code: MIVNEQLAIDHGLKKDEYKKICDLLKRVPNITELGIFSAMWNEHCSYKSSRFHLKNLPTKGKNVIQGPGENAGVIDIGDDDAIVFKIESHNHPSFIEPYQGAATGVGGIMRDVFTMGARPIANLNSIHFGSPQHKKTKNLLRGVVHGIGGYGNCMGVPTIAGQTSFDESYNGNILVNAMTLGHVKKDKIFYSKAAGLGKPVIYVGSKTGRDGIHGASMASASFDDKIEEKKPTVQVGDPFTEKLLLEACLELMAGDSIIAIQDMGAAGLTSSSIEMASKGNLGIEINLSKVPCREANMSPYEIMLSESQERMLIVLENGKEEMAKKIFDKWNLDFAVIGQTTKSKKIELYFNEEKVADIPVNTLVENSPMYDRKWKKAKLPKRIKVDKEQFKTLKVKNVLNKILSNPNVCSKEWIWQQYDHTVMGDTIQKPGGDAGVVRVHGTNKAVAASVDSSAVYCWAHPLSGGKQIVCESWRNLISVGAKPIAITNCLNFGSPENEENMGEFVECVQGLGEASAYLEFPVVSGNVSFYNQTKDIGIKPTPAIGGVGLIKDYQNMVTMDLKEADNILLVIGKTEGHLDQSLFARDILNEKNGPPPEINLFNEKNNGETILKLINKKFIKSAHDVSLGGIITALSKMCIKGKKGATLKKSNYLINQFEYLFGEDQGRYIIEISKDDLENATKILQENSVHFDELGLVNEDGLIIDDKTKVSIDDLIKSHTNWLTNYMEN.

The active site involves H44. The ATP site is built by Y47 and K86. Residue E88 participates in Mg(2+) binding. Substrate is bound by residues 89–92 and R111; that span reads SHNH. The Proton acceptor role is filled by H90. Mg(2+) is bound at residue D112. Q235 provides a ligand contact to substrate. Position 263 (D263) interacts with Mg(2+). Residue 307-309 participates in substrate binding; that stretch reads ESQ. Residues N489 and G526 each coordinate ATP. N527 is a binding site for Mg(2+). S529 contacts substrate.

The protein belongs to the FGAMS family. In terms of assembly, monomer. Part of the FGAM synthase complex composed of 1 PurL, 1 PurQ and 2 PurS subunits.

The protein localises to the cytoplasm. It carries out the reaction N(2)-formyl-N(1)-(5-phospho-beta-D-ribosyl)glycinamide + L-glutamine + ATP + H2O = 2-formamido-N(1)-(5-O-phospho-beta-D-ribosyl)acetamidine + L-glutamate + ADP + phosphate + H(+). The protein operates within purine metabolism; IMP biosynthesis via de novo pathway; 5-amino-1-(5-phospho-D-ribosyl)imidazole from N(2)-formyl-N(1)-(5-phospho-D-ribosyl)glycinamide: step 1/2. Its function is as follows. Part of the phosphoribosylformylglycinamidine synthase complex involved in the purines biosynthetic pathway. Catalyzes the ATP-dependent conversion of formylglycinamide ribonucleotide (FGAR) and glutamine to yield formylglycinamidine ribonucleotide (FGAM) and glutamate. The FGAM synthase complex is composed of three subunits. PurQ produces an ammonia molecule by converting glutamine to glutamate. PurL transfers the ammonia molecule to FGAR to form FGAM in an ATP-dependent manner. PurS interacts with PurQ and PurL and is thought to assist in the transfer of the ammonia molecule from PurQ to PurL. This Pelagibacter ubique (strain HTCC1062) protein is Phosphoribosylformylglycinamidine synthase subunit PurL.